The following is a 3206-amino-acid chain: Highly reducing polyketide synthase ltbA (3206 aa).

A Ketosynthase family 3 (KS3) domain is found at 5 to 434; it reads PAPIAIIGVG…GTNCHVILEA (430 aa). Active-site for beta-ketoacyl synthase activity residues include Cys-179, His-314, and His-354. Polar residues predominate over residues 441-463; the sequence is PTGTNGIKTNGTRINGIKTNGAD. The segment at 441-472 is disordered; it reads PTGTNGIKTNGTRINGIKTNGADTNERESMKN. The interval 575-890 is malonyl-CoA:ACP transacylase (MAT) domain; sequence VFSGQGAQWH…EYLSALQRNT (316 aa). The segment at 958–1098 is N-terminal hotdog fold; sequence HDLLGLFDPA…GEITVEYETD (141 aa). Residues 958-1278 form a dehydratase (DH) domain region; sequence HDLLGLFDPA…LLVNLRAIGE (321 aa). Residues 958 to 1284 enclose the PKS/mFAS DH domain; it reads HDLLGLFDPA…AIGETREDED (327 aa). His-990 serves as the catalytic Proton acceptor; for dehydratase activity. The C-terminal hotdog fold stretch occupies residues 1128–1284; sequence DTDMTKSEFY…AIGETREDED (157 aa). Asp-1193 acts as the Proton donor; for dehydratase activity in catalysis. A methyltransferase (CMet) domain region spans residues 1450–1640; sequence ESGILVGPYE…LARNGFGGIH (191 aa). Residues 1871-2185 form an enoyl reductase (ER) domain region; it reads LLSSLRFVDD…RKHTGKVVLQ (315 aa). The segment at 2208 to 2395 is ketoreductase (KR) domain; the sequence is GTYVAAGGLG…SVDAHGALKE (188 aa). The Carrier domain maps to 2499–2577; the sequence is EEAEQLIRDA…ALAATVASRS (79 aa). O-(pantetheine 4'-phosphoryl)serine is present on Ser-2537. Positions 2584–2611 are disordered; sequence IRHSSRLQEATTQAENKDAPKNEKEGPS. Residues 2598 to 2610 are compositionally biased toward basic and acidic residues; sequence ENKDAPKNEKEGP. A carnitine O-acyltransferase (cAT) domain region spans residues 2994-3206; sequence HLIPSFGKAV…IKTIIQAGQE (213 aa).

The cofactor is pantetheine 4'-phosphate.

The protein operates within secondary metabolite biosynthesis. Its function is as follows. Highly reducing polyketide synthase; part of the gene cluster that mediates the biosynthesis of luteodienoside A, a glycosylated polyketide consisting of an unusual 1-O-beta-D-glucopyranosyl-myo-inositol (glucinol) ester of 3-hydroxy-2,2,4-trimethylocta-4,6-dienoic acid. LtbA produces the trimethylated polyketide chain from acetyl-CoA, malonyl-CoA and S-adenosylmethionine (SAM). The ltbA carnitine O-acyltransferase (cAT) domain then uses glucinol produced by the glycosyltransferase ltbB as an offloading substrate to release luteodienoside A. Furthermore, the PKS C-methyltransferase (CMeT) domain is capable of catalysing gem-dimethylation of the 3-hydroxy-2,2,4-trimethylocta-4,6-dienoic acid intermediate, without requiring reversible product release and recapture by the cAT domain. Since ltbA and ltbB are sufficient for the biosynthesis of luteodienoside A, the functions of the methyltransferase ltbC and the FAD-binding monooxygenase ltbD within the pathway remain obscur. This Aspergillus luteorubrus protein is Highly reducing polyketide synthase ltbA.